The sequence spans 880 residues: Leucine--tRNA ligase (880 aa).

The short motif at 49 to 59 is the 'HIGH' region element; the sequence is PYPSGRIHMGH. Residues 638 to 642 carry the 'KMSKS' region motif; sequence KMSKS. Residue lysine 641 coordinates ATP.

Belongs to the class-I aminoacyl-tRNA synthetase family.

It localises to the cytoplasm. It carries out the reaction tRNA(Leu) + L-leucine + ATP = L-leucyl-tRNA(Leu) + AMP + diphosphate. The chain is Leucine--tRNA ligase from Bartonella quintana (strain Toulouse) (Rochalimaea quintana).